The sequence spans 465 residues: Putative F-box/LRR-repeat protein At3g28410 (465 aa).

Positions 27-73 (ADFINYMPDDILHHILSFIPTDLAMRTSVLSRRWRHVWCETPCLDIK) constitute an F-box domain. LRR repeat units lie at residues 127–155 (VRDFTYTKTYRFPDIFYISSSLKQLDVTL), 178–203 (FCQIPDESMHNILSGCPILESLTLDT), 207–225 (LERLDLSKSPNLRRLDINR), 278–302 (ADRYQTMALEMLSKFHNVKRLTVGE), 332–357 (FVRSVIPGISRLLQNSPGLKKLTLHT), 402–427 (TSKLVASFMNLVLRNAKTLERMVVWL), and 447–465 (VETLSHNNNVSILLKQSNC).

The polypeptide is Putative F-box/LRR-repeat protein At3g28410 (Arabidopsis thaliana (Mouse-ear cress)).